Consider the following 117-residue polypeptide: Gamma-aminobutyric acid receptor-associated protein-like 1 (117 aa).

The Phosphatidylethanolamine amidated glycine; alternate moiety is linked to residue glycine 116. Residue glycine 116 is the site of Phosphatidylserine amidated glycine; alternate attachment. Lysine 117 is a propeptide (removed in mature form).

It belongs to the ATG8 family. As to quaternary structure, interacts with ATG13, OPRK1, RB1CC1 and ULK1. Interacts with TP53INP1 and TP53INP2. Directly interacts with SQSTM1. Interacts with ATG3, ATG7 and MAP15. Interacts with TECPR2. Interacts with TBC1D5. Interacts with MAPK15. Interacts with TRIM5. Interacts with MEFV and TRIM21. Interacts with WDFY3. Interacts with the reticulophagy receptor TEX264. Interacts with UBA5. Interacts with KBTBD6 and KBTBD7; the interaction is direct. Interacts with reticulophagy regulators RETREG1, RETREG2 and RETREG3. Interacts with IRGM. Interacts with DNM2. Interacts with NCOA4 (via C-terminus). Post-translationally, the precursor molecule is cleaved by ATG4 (ATG4A, ATG4B, ATG4C or ATG4D) to expose the glycine at the C-terminus and form the cytosolic form, GABARAPL1-I. The processed form is then activated by APG7L/ATG7, transferred to ATG3 and conjugated to phosphatidylethanolamine (PE) phospholipid to form the membrane-bound form, GABARAPL1-II. During non-canonical autophagy, the processed form is conjugated to phosphatidylserine (PS) phospholipid. ATG4 proteins also mediate the delipidation of PE-conjugated forms required for GABARAPL1 recycling when autophagosomes fuse with lysosomes. In addition, ATG4B and ATG4D mediate delipidation of ATG8 proteins conjugated to PS during non-canonical autophagy. ATG4B constitutes the major protein for proteolytic activation. ATG4D is the main enzyme for delipidation activity.

The protein localises to the cytoplasmic vesicle. Its subcellular location is the autophagosome. It is found in the cytoplasmic vesicle membrane. The protein resides in the cytoplasm. It localises to the cytoskeleton. The protein localises to the endoplasmic reticulum. Its subcellular location is the golgi apparatus. Its function is as follows. Ubiquitin-like modifier that increases cell-surface expression of kappa-type opioid receptor through facilitating anterograde intracellular trafficking of the receptor. Involved in formation of autophagosomal vacuoles. While LC3s are involved in elongation of the phagophore membrane, the GABARAP/GATE-16 subfamily is essential for a later stage in autophagosome maturation. Through its interaction with the reticulophagy receptor TEX264, participates in the remodeling of subdomains of the endoplasmic reticulum into autophagosomes upon nutrient stress, which then fuse with lysosomes for endoplasmic reticulum turnover. In Bos taurus (Bovine), this protein is Gamma-aminobutyric acid receptor-associated protein-like 1.